A 422-amino-acid polypeptide reads, in one-letter code: UDP-N-acetylglucosamine 1-carboxyvinyltransferase (422 aa).

A phosphoenolpyruvate-binding site is contributed by 22-23 (KN). Arg-93 provides a ligand contact to UDP-N-acetyl-alpha-D-glucosamine. Catalysis depends on Cys-117, which acts as the Proton donor. Position 117 is a 2-(S-cysteinyl)pyruvic acid O-phosphothioketal (Cys-117). UDP-N-acetyl-alpha-D-glucosamine contacts are provided by residues 122 to 126 (RPVDL), Asp-308, and Leu-330.

The protein belongs to the EPSP synthase family. MurA subfamily.

It localises to the cytoplasm. The enzyme catalyses phosphoenolpyruvate + UDP-N-acetyl-alpha-D-glucosamine = UDP-N-acetyl-3-O-(1-carboxyvinyl)-alpha-D-glucosamine + phosphate. The protein operates within cell wall biogenesis; peptidoglycan biosynthesis. Cell wall formation. Adds enolpyruvyl to UDP-N-acetylglucosamine. The sequence is that of UDP-N-acetylglucosamine 1-carboxyvinyltransferase from Helicobacter pylori (strain J99 / ATCC 700824) (Campylobacter pylori J99).